Here is a 95-residue protein sequence, read N- to C-terminus: Aspartyl/glutamyl-tRNA(Asn/Gln) amidotransferase subunit C (95 aa).

Basic and acidic residues predominate over residues 55-67 (ALERRNVTREDQV). The tract at residues 55 to 83 (ALERRNVTREDQVHNSLTNDKALENAPET) is disordered.

Belongs to the GatC family. In terms of assembly, heterotrimer of A, B and C subunits.

It carries out the reaction L-glutamyl-tRNA(Gln) + L-glutamine + ATP + H2O = L-glutaminyl-tRNA(Gln) + L-glutamate + ADP + phosphate + H(+). The enzyme catalyses L-aspartyl-tRNA(Asn) + L-glutamine + ATP + H2O = L-asparaginyl-tRNA(Asn) + L-glutamate + ADP + phosphate + 2 H(+). In terms of biological role, allows the formation of correctly charged Asn-tRNA(Asn) or Gln-tRNA(Gln) through the transamidation of misacylated Asp-tRNA(Asn) or Glu-tRNA(Gln) in organisms which lack either or both of asparaginyl-tRNA or glutaminyl-tRNA synthetases. The reaction takes place in the presence of glutamine and ATP through an activated phospho-Asp-tRNA(Asn) or phospho-Glu-tRNA(Gln). The sequence is that of Aspartyl/glutamyl-tRNA(Asn/Gln) amidotransferase subunit C from Natranaerobius thermophilus (strain ATCC BAA-1301 / DSM 18059 / JW/NM-WN-LF).